A 97-amino-acid polypeptide reads, in one-letter code: ESAT-6-like protein EsxG (97 aa).

Ser2 carries the post-translational modification N-acetylserine.

Belongs to the WXG100 family. CFP-10 subfamily. Forms a tight 1:1 complex with EsxH.

The protein resides in the secreted. In terms of biological role, esxG, in complex with EsxH, disrupts ESCRT function and impairs host phagosome maturation, thereby promoting intracellular bacterial growth. The complex acts by interacting, via EsxH, with the host hepatocyte growth factor-regulated tyrosine kinase substrate (HGS/HRS), a component of the ESCRT machinery. EsxG stabilizes EsxH in the host cytosol. The sequence is that of ESAT-6-like protein EsxG from Mycobacterium tuberculosis (strain ATCC 25618 / H37Rv).